A 173-amino-acid polypeptide reads, in one-letter code: RNA 2',3'-cyclic phosphodiesterase (173 aa).

H38 serves as the catalytic Proton donor. 2 consecutive short sequence motifs (HXTX) follow at residues H38–V41 and H118–I121. The active-site Proton acceptor is the H118.

Belongs to the 2H phosphoesterase superfamily. ThpR family.

It catalyses the reaction a 3'-end 2',3'-cyclophospho-ribonucleotide-RNA + H2O = a 3'-end 2'-phospho-ribonucleotide-RNA + H(+). Its function is as follows. Hydrolyzes RNA 2',3'-cyclic phosphodiester to an RNA 2'-phosphomonoester. This is RNA 2',3'-cyclic phosphodiesterase from Methanocaldococcus jannaschii (strain ATCC 43067 / DSM 2661 / JAL-1 / JCM 10045 / NBRC 100440) (Methanococcus jannaschii).